The sequence spans 191 residues: Ribosome hibernation promotion factor (191 aa).

The tract at residues 100–123 (KQRQEGRPEPLPGPAEAEVNAQGS) is disordered.

It belongs to the HPF/YfiA ribosome-associated protein family. Long HPF subfamily. Interacts with 100S ribosomes.

It localises to the cytoplasm. In terms of biological role, required for dimerization of active 70S ribosomes into 100S ribosomes in stationary phase; 100S ribosomes are translationally inactive and sometimes present during exponential growth. The sequence is that of Ribosome hibernation promotion factor from Deinococcus radiodurans (strain ATCC 13939 / DSM 20539 / JCM 16871 / CCUG 27074 / LMG 4051 / NBRC 15346 / NCIMB 9279 / VKM B-1422 / R1).